A 96-amino-acid chain; its full sequence is Co-chaperonin GroES (96 aa).

This sequence belongs to the GroES chaperonin family. As to quaternary structure, heptamer of 7 subunits arranged in a ring. Interacts with the chaperonin GroEL.

It localises to the cytoplasm. Together with the chaperonin GroEL, plays an essential role in assisting protein folding. The GroEL-GroES system forms a nano-cage that allows encapsulation of the non-native substrate proteins and provides a physical environment optimized to promote and accelerate protein folding. GroES binds to the apical surface of the GroEL ring, thereby capping the opening of the GroEL channel. The polypeptide is Co-chaperonin GroES (Haemophilus influenzae (strain PittEE)).